The primary structure comprises 248 residues: Chromatin target of PRMT1 protein (248 aa).

Ala-2 carries the N-acetylalanine modification. Phosphoserine is present on residues Ser-40, Ser-49, and Ser-64. A Glycyl lysine isopeptide (Lys-Gly) (interchain with G-Cter in SUMO2) cross-link involves residue Lys-70. Residues 151–204 form a disordered region; sequence LRRGGVRGRGGPGRGGLGRGAMGRGGIGGRGRGMIGRGRGGFGGRGRGRGRGRG. Positions 153–206 are interaction with PRMT1; the sequence is RGGVRGRGGPGRGGLGRGAMGRGGIGGRGRGMIGRGRGGFGGRGRGRGRGRGAL. The segment covering 157–195 has biased composition (gly residues); the sequence is RGRGGPGRGGLGRGAMGRGGIGGRGRGMIGRGRGGFGGR. The short motif at 194–203 is the GAR motif; involved in 5hmC binding element; sequence GRGRGRGRGR. Thr-242 carries the phosphothreonine modification.

In terms of assembly, interacts with PRMT1 and PRMT5. Interacts with the 5FMC complex; the interaction is methylation-dependent. Interacts with FYTTD1, SET and PRC1 complex members CBX4, RNF2 and PHC2; the interactions are methylation-independent. Interacts with ZNF148. Interacts with WDR77 and ER. Asymmetrically methylated by PRMT1. Symmetrically methylated by PRMT5.

It localises to the nucleus. It is found in the nucleolus. Its subcellular location is the nucleoplasm. The protein localises to the nucleus speckle. In terms of biological role, plays an important role in the ligand-dependent activation of estrogen receptor target genes. May play a role in the silencing of fetal globin genes. Recruits the 5FMC complex to ZNF148, leading to desumoylation of ZNF148 and subsequent transactivation of ZNF148 target genes. Required for the tumorigenicity of glioblastoma cells. Binds to 5-hydroxymethylcytosine (5hmC) and associates with the methylosome complex containing PRMT1, PRMT5, MEP50 and ERH. The CHTOP-methylosome complex associated with 5hmC methylates H4R3 and transactivates genes involved in glioblastomagenesis. This Rattus norvegicus (Rat) protein is Chromatin target of PRMT1 protein (Chtop).